A 274-amino-acid chain; its full sequence is Kit ligand (274 aa).

The N-terminal stretch at Met1–Thr25 is a signal peptide. At Gln26 the chain carries Pyrrolidone carboxylic acid. Topologically, residues Gln26 to Gln215 are extracellular. 2 cysteine pairs are disulfide-bonded: Cys29–Cys114 and Cys68–Cys164. Residues Asn90, Asn145, and Asn196 are each glycosylated (N-linked (GlcNAc...) asparagine). The helical transmembrane segment at Trp216–Trp238 threads the bilayer. Residues Lys239–Val274 are Cytoplasmic-facing.

It belongs to the SCF family. In terms of assembly, homodimer, non-covalently linked. Post-translationally, a soluble form is produced by proteolytic processing of isoform 1 in the extracellular domain.

It is found in the cell membrane. Its subcellular location is the cytoplasm. The protein localises to the cytoskeleton. It localises to the cell projection. The protein resides in the lamellipodium. It is found in the filopodium. Its subcellular location is the secreted. In terms of biological role, stimulates the proliferation of mast cells. Able to augment the proliferation of both myeloid and lymphoid hematopoietic progenitors in bone marrow culture. Also mediates cell-cell adhesion. Acts synergistically with other cytokines, probably interleukins. The polypeptide is Kit ligand (KITLG) (Bos taurus (Bovine)).